Consider the following 954-residue polypeptide: Calsyntenin-1 (954 aa).

Positions 1 to 25 are cleaved as a signal peptide; sequence MRIRGVKPFASAVGLLLGLLYAVDA. Topologically, residues 26–833 are extracellular; the sequence is AKVNKHKPWI…THQASVVPSA (808 aa). Cadherin domains follow at residues 35 to 151 and 152 to 252; these read IETT…SPVF and KEKS…KPSW. Asparagine 333, asparagine 353, and asparagine 552 each carry an N-linked (GlcNAc...) asparagine glycan. A helical transmembrane segment spans residues 834–854; sequence ATIVIVVCVSFLVFMIILGVF. Residues 855 to 954 lie on the Cytoplasmic side of the membrane; that stretch reads RIRAAHQRTM…LEWDDSTLTY (100 aa). The disordered stretch occupies residues 891 to 954; that stretch reads TYEDQHSSEE…LEWDDSTLTY (64 aa). The segment covering 900–935 has biased composition (acidic residues); sequence EEGDEEEEESEDGEEEDDITSAESDSSEDEAGEQED.

Belongs to the calsyntenin family. As to quaternary structure, homooligomer and heterooligomer; mediates both homophilic and heterophilc interactions with clstn2 and clstn3 paralogs via cadherin domains. In terms of tissue distribution, by 48 hours post-fertilization (hpf), widely expressed in the brain, with strong expression in the telencephalon and the midbrain.

It is found in the postsynaptic cell membrane. Its subcellular location is the endoplasmic reticulum membrane. The protein localises to the golgi apparatus membrane. The protein resides in the cell projection. It localises to the neuron projection. In terms of biological role, postsynaptic adhesion molecule involved in vesicle trafficking; required for branching of peripheral but not central axons of sensory neurons. Promotes synapse development by acting as a cell adhesion molecule at the postsynaptic membrane, which associates with presynaptic neurexins. In Danio rerio (Zebrafish), this protein is Calsyntenin-1.